The chain runs to 117 residues: DNA-binding protein VNG_2008H (117 aa).

Residues 1–59 are disordered; that stretch reads MSGNPDDDRLEELRQRKKEQLKQQQQGGDAEREAQQQQAQQAEQQKQAMLKQNLTDGAR. A compositionally biased stretch (basic and acidic residues) spans 11–21; that stretch reads EELRQRKKEQL. Over residues 35–48 the composition is skewed to low complexity; the sequence is QQQQAQQAEQQKQA.

The protein belongs to the PDCD5 family.

The chain is DNA-binding protein VNG_2008H from Halobacterium salinarum (strain ATCC 700922 / JCM 11081 / NRC-1) (Halobacterium halobium).